Reading from the N-terminus, the 209-residue chain is rRNA N(6)-adenosine-methyltransferase METTL5 (209 aa).

S-adenosyl-L-methionine is bound by residues Gln-28, Thr-31, Gly-59, Cys-62, Val-64, Asp-81, and 108–109 (DV).

It belongs to the methyltransferase superfamily. PrmA family. Heterodimer; heterodimerizes with TRMT112. As to expression, ubiquitously expressed in brain.

Its subcellular location is the nucleus. The protein localises to the presynapse. It is found in the postsynapse. The enzyme catalyses adenosine(1832) in 18S rRNA + S-adenosyl-L-methionine = N(6)-methyladenosine(1832) in 18S rRNA + S-adenosyl-L-homocysteine + H(+). RRNA N6-adenosine-methyltransferase activity is inhibited by zinc. Catalytic subunit of a heterodimer with TRMT112, which specifically methylates the 6th position of adenine in position 1832 of 18S rRNA. N6-methylation of adenine(1832) in 18S rRNA resides in the decoding center of 18S rRNA and is required for translation and embryonic stem cells (ESCs) pluripotency and differentiation. This chain is rRNA N(6)-adenosine-methyltransferase METTL5, found in Mus musculus (Mouse).